Consider the following 633-residue polypeptide: Probable potassium transport system protein Kup 2 (633 aa).

12 helical membrane passes run 18-38 (FLALTIGAIGVVYGDIGTSPL), 61-81 (LVSLVLWTLTAIVTIKYVLFL), 107-127 (PVLMFFAGVLGAALFIGDAMI), 143-163 (VAPALHDYVLPISVVIILLLF), 173-193 (VSVFFGPITLVWFLMMAAAGV), 211-231 (AIGFLWNAGLIGFIVLGAIFL), 255-275 (WFAVVFPALALNYLGQGALVL), 287-307 (LMFPNWALLPMVILATAATII), 345-365 (IYLPLVNTILLTGVLALMLMF), 371-391 (LAPAYGVSITGAMVIDTILAF), 402-422 (ALTAIAVLLPLFNLELVFLGA), and 427-447 (VHHGGYVPILIAGTLITMMWT).

This sequence belongs to the HAK/KUP transporter (TC 2.A.72) family.

It localises to the cell inner membrane. It catalyses the reaction K(+)(in) + H(+)(in) = K(+)(out) + H(+)(out). Its function is as follows. Transport of potassium into the cell. Likely operates as a K(+):H(+) symporter. The protein is Probable potassium transport system protein Kup 2 of Rhizobium meliloti (strain 1021) (Ensifer meliloti).